We begin with the raw amino-acid sequence, 737 residues long: Alpha-adducin (737 aa).

Met-1 is modified (N-acetylmethionine). Positions 1–21 (MNGDSRAAVVTSPPPTTAPHK) are disordered. Ser-12 is modified (phosphoserine). At Ser-59 the chain carries Phosphoserine; by PKA. Ser-64 bears the Phosphoserine mark. Thr-331 is modified (phosphothreonine). A phosphoserine mark is found at Ser-334, Ser-353, Ser-355, Ser-358, and Ser-366. Ser-408 carries the post-translational modification Phosphoserine; by PKA. The segment covering 419-430 (YSFTSDGDSGTC) has biased composition (polar residues). Disordered stretches follow at residues 419-490 (YSFT…NLFV) and 576-737 (RREV…KSES). At Ser-427 the chain carries Phosphoserine. Residue Thr-429 is modified to Phosphothreonine. Phosphoserine is present on Ser-431. Residue Ser-436 is modified to Phosphoserine; by PKA. Thr-445 carries the phosphothreonine; by ROCK2 modification. A phosphoserine mark is found at Ser-464 and Ser-465. Phosphothreonine; by ROCK2 is present on Thr-480. A Phosphoserine; by PKA modification is found at Ser-481. The span at 576-601 (RREVERKQKGSEENLDEAREQKEKSP) shows a compositional bias: basic and acidic residues. Phosphoserine occurs at positions 586, 600, and 613. Pro residues predominate over residues 602 to 614 (PDQPAVPYPPPST). Residue Thr-614 is modified to Phosphothreonine. 4 positions are modified to phosphoserine: Ser-678, Ser-707, Ser-710, and Ser-714. A compositionally biased stretch (low complexity) spans 687 to 714 (PVAEEAAPSAAEEGAAADPGSDGSPGKS). Residues 715–737 (PSKKKKKFRTPSFLKKSKKKSES) are compositionally biased toward basic residues. Ser-716 carries the phosphoserine; by PKC modification. Residues 717 to 734 (KKKKKFRTPSFLKKSKKK) are interaction with calmodulin. Ser-726 carries the post-translational modification Phosphoserine; by PKA and PKC.

The protein belongs to the aldolase class II family. Adducin subfamily. Heterodimer of an alpha and a beta subunit or an alpha and a gamma subunit.

It localises to the cytoplasm. It is found in the cytoskeleton. The protein localises to the cell membrane. Membrane-cytoskeleton-associated protein that promotes the assembly of the spectrin-actin network. Binds to calmodulin. This chain is Alpha-adducin (ADD1), found in Pongo abelii (Sumatran orangutan).